A 600-amino-acid chain; its full sequence is DNA mismatch repair protein MutL (600 aa).

Belongs to the DNA mismatch repair MutL/HexB family.

Its function is as follows. This protein is involved in the repair of mismatches in DNA. It is required for dam-dependent methyl-directed DNA mismatch repair. May act as a 'molecular matchmaker', a protein that promotes the formation of a stable complex between two or more DNA-binding proteins in an ATP-dependent manner without itself being part of a final effector complex. The protein is DNA mismatch repair protein MutL of Rickettsia typhi (strain ATCC VR-144 / Wilmington).